Here is a 235-residue protein sequence, read N- to C-terminus: Large ribosomal subunit protein uL1 (235 aa).

Belongs to the universal ribosomal protein uL1 family. Part of the 50S ribosomal subunit.

Functionally, binds directly to 23S rRNA. The L1 stalk is quite mobile in the ribosome, and is involved in E site tRNA release. Protein L1 is also a translational repressor protein, it controls the translation of the L11 operon by binding to its mRNA. In Fusobacterium nucleatum subsp. nucleatum (strain ATCC 25586 / DSM 15643 / BCRC 10681 / CIP 101130 / JCM 8532 / KCTC 2640 / LMG 13131 / VPI 4355), this protein is Large ribosomal subunit protein uL1.